Here is a 301-residue protein sequence, read N- to C-terminus: Transmembrane protein 178A (301 aa).

The N-terminal stretch at 1-25 (MEKRALVTAISLSMSLLALMLLVTA) is a signal peptide. Over 26-183 (IFTDHWYETD…LLHLRRITAG (158 aa)) the chain is Extracellular. Asparagine 162 carries an N-linked (GlcNAc...) asparagine glycan. Residues 184–204 (FLGMAAAVMLCGSIVAAVGFF) traverse the membrane as a helical segment. Residues 205-215 (WEESLTQHVSG) are Cytoplasmic-facing. Residues 216–236 (LLFLMAGIFCTISLCTYAASV) form a helical membrane-spanning segment. Residues 237–258 (SYDLSRNPPFIYGLPSDVDHGY) are Extracellular-facing. A helical membrane pass occupies residues 259–279 (GWSIFCAWVSLGLTVASGCIC). Residues 280–301 (TTYPFLSRTKALRSKTARESSV) lie on the Cytoplasmic side of the membrane.

It belongs to the TMEM178 family.

The protein resides in the endoplasmic reticulum membrane. Functionally, may act as a negative regulator of osteoclast differentiation. In Danio rerio (Zebrafish), this protein is Transmembrane protein 178A (tmem178a).